The sequence spans 240 residues: Ribosomal RNA large subunit methyltransferase E (240 aa).

Residues Met-1–Arg-13 are compositionally biased toward polar residues. Positions Met-1–Val-20 are disordered. S-adenosyl-L-methionine-binding residues include Gly-85, Trp-87, Asp-113, Asp-129, and Asp-153. The active-site Proton acceptor is Lys-193.

This sequence belongs to the class I-like SAM-binding methyltransferase superfamily. RNA methyltransferase RlmE family.

Its subcellular location is the cytoplasm. The enzyme catalyses uridine(2552) in 23S rRNA + S-adenosyl-L-methionine = 2'-O-methyluridine(2552) in 23S rRNA + S-adenosyl-L-homocysteine + H(+). Specifically methylates the uridine in position 2552 of 23S rRNA at the 2'-O position of the ribose in the fully assembled 50S ribosomal subunit. The polypeptide is Ribosomal RNA large subunit methyltransferase E (Roseobacter denitrificans (strain ATCC 33942 / OCh 114) (Erythrobacter sp. (strain OCh 114))).